A 64-amino-acid chain; its full sequence is Large ribosomal subunit protein bL33 (64 aa).

It belongs to the bacterial ribosomal protein bL33 family.

The protein is Large ribosomal subunit protein bL33 of Prochlorococcus marinus (strain MIT 9313).